Consider the following 557-residue polypeptide: Copine-4 (557 aa).

C2 domains lie at 3–131 and 137–264; these read KMSN…SKSL and TAGK…VQWE. Positions 170, 176, 232, 234, and 240 each coordinate Ca(2+). Residues 305-507 enclose the VWFA domain; it reads QIQFTVAIDF…VLRDIVQFVP (203 aa).

This sequence belongs to the copine family. As to quaternary structure, interacts (via VWFA domain) with ACTB, BCOR, BICD2, CCDC22, CDC42BPB, CEP162, MYCBP2, NONO, PDCD6, PITPNM2, RDX, SKIL, SKT, SPTBN1, UBE2O and WTAP. It depends on Ca(2+) as a cofactor.

Its function is as follows. Probable calcium-dependent phospholipid-binding protein that may play a role in calcium-mediated intracellular processes. This Mus musculus (Mouse) protein is Copine-4.